The following is a 147-amino-acid chain: uncharacterized protein (147 aa).

This is an uncharacterized protein from Mycolicibacterium smegmatis (Mycobacterium smegmatis).